The primary structure comprises 320 residues: Undecaprenyl-diphosphatase (320 aa).

Helical transmembrane passes span 9–29 (FVLI…LEVF), 82–102 (GVAF…WYFW), 130–150 (LGIV…KTFI), 161–181 (LGAI…GEKL), 191–211 (LTMQ…IPGV), 236–256 (FLLG…DLLA), 265–285 (LPLI…IAGL), and 296–316 (VFIW…SAGI).

This sequence belongs to the UppP family.

Its subcellular location is the cell inner membrane. It catalyses the reaction di-trans,octa-cis-undecaprenyl diphosphate + H2O = di-trans,octa-cis-undecaprenyl phosphate + phosphate + H(+). Its function is as follows. Catalyzes the dephosphorylation of undecaprenyl diphosphate (UPP). Confers resistance to bacitracin. This Nostoc sp. (strain PCC 7120 / SAG 25.82 / UTEX 2576) protein is Undecaprenyl-diphosphatase.